Consider the following 229-residue polypeptide: Ribosome maturation factor RimM (229 aa).

Residues methionine 1 to valine 21 form a disordered region. In terms of domain architecture, PRC barrel spans alanine 148 to tyrosine 229.

It belongs to the RimM family. In terms of assembly, binds ribosomal protein uS19.

It is found in the cytoplasm. An accessory protein needed during the final step in the assembly of 30S ribosomal subunit, possibly for assembly of the head region. Essential for efficient processing of 16S rRNA. May be needed both before and after RbfA during the maturation of 16S rRNA. It has affinity for free ribosomal 30S subunits but not for 70S ribosomes. The protein is Ribosome maturation factor RimM of Burkholderia mallei (strain NCTC 10247).